The sequence spans 1132 residues: DNA-directed RNA polymerase I subunit RPA2 (1132 aa).

Residues 1067 to 1098 (CMDCGSLLSPLLEKPPPNWSATRHRKTICLLC) form a C4-type zinc finger.

This sequence belongs to the RNA polymerase beta chain family. In terms of assembly, component of the RNA polymerase I (Pol I) complex consisting of at least 13 subunits.

It localises to the nucleus. Its subcellular location is the nucleolus. The protein localises to the chromosome. It carries out the reaction RNA(n) + a ribonucleoside 5'-triphosphate = RNA(n+1) + diphosphate. Functionally, DNA-dependent RNA polymerase catalyzes the transcription of DNA into RNA using the four ribonucleoside triphosphates as substrates. Second largest core component of RNA polymerase I which synthesizes ribosomal RNA precursors. Proposed to contribute to the polymerase catalytic activity and forms the polymerase active center together with the largest subunit. Pol I is composed of mobile elements and RPA2 is part of the core element with the central large cleft and probably a clamp element that moves to open and close the cleft. The sequence is that of DNA-directed RNA polymerase I subunit RPA2 (polr1b) from Danio rerio (Zebrafish).